Here is a 363-residue protein sequence, read N- to C-terminus: 3-isopropylmalate dehydrogenase (363 aa).

NAD(+) is bound at residue 78-91; it reads GPKWENLPPESQPE. Substrate-binding residues include arginine 99, arginine 109, arginine 138, and aspartate 227. The Mg(2+) site is built by aspartate 227, aspartate 251, and aspartate 255. 285–297 is a binding site for NAD(+); that stretch reads GSAPDIAGKNIAN.

It belongs to the isocitrate and isopropylmalate dehydrogenases family. LeuB type 1 subfamily. As to quaternary structure, homodimer. The cofactor is Mg(2+). Mn(2+) serves as cofactor.

The protein resides in the cytoplasm. It catalyses the reaction (2R,3S)-3-isopropylmalate + NAD(+) = 4-methyl-2-oxopentanoate + CO2 + NADH. The protein operates within amino-acid biosynthesis; L-leucine biosynthesis; L-leucine from 3-methyl-2-oxobutanoate: step 3/4. Functionally, catalyzes the oxidation of 3-carboxy-2-hydroxy-4-methylpentanoate (3-isopropylmalate) to 3-carboxy-4-methyl-2-oxopentanoate. The product decarboxylates to 4-methyl-2 oxopentanoate. The protein is 3-isopropylmalate dehydrogenase of Salmonella typhi.